A 549-amino-acid polypeptide reads, in one-letter code: MTAKDILFDAEARAKLKVGVDKLANAVKVTLGPAGRNVLIDKKFGAPTSTKDGVTVAKEVELEDAFENMGAQMVREVSSKTSDVAGDGTTTATVLAQAIYREGLKNVAAGARPIDLKRGIDLAVKDVVAELREISRDITGKKEIAQVGTISANNDPEIGELIAEAMDKVGKDGVITVEEAKGMDTELTVVEGMQFDRGYLSPYFVTNSEKMDADLEDPYILIYDKKISNMKELLPVLEKTAQSGRPLMIIAEDIEGEALATLVVNKLRGTLKVCAVKAPGFGDRRKAMLEDIAILTGGTVISEEKGYKLENATISYLGQAASITVDKDNTTIVDGKGQADDIKARIGEIKGQIEKSTSDYDTEKLQERLAKLSGGVAVLNIGASTEVEMKEKKARVEDALHATRAAVQEGIVAGGGVALIRAAKALDATNPENEDQKTGVDIIRRALEEPLRQIVANTGTTDGAVVVEKVKNSEGDYGFNARTEEYMNLIEAGVVDPTKVTRTALENAASVAGILLTTEAAITDIKEDGSDMPPMPGGMGGMGGMGGMM.

Residues 30 to 33 (TLGP), K51, 87 to 91 (DGTTT), G415, and D496 each bind ATP.

This sequence belongs to the chaperonin (HSP60) family. Forms a cylinder of 14 subunits composed of two heptameric rings stacked back-to-back. Interacts with the co-chaperonin GroES.

Its subcellular location is the cytoplasm. It carries out the reaction ATP + H2O + a folded polypeptide = ADP + phosphate + an unfolded polypeptide.. Its function is as follows. Together with its co-chaperonin GroES, plays an essential role in assisting protein folding. The GroEL-GroES system forms a nano-cage that allows encapsulation of the non-native substrate proteins and provides a physical environment optimized to promote and accelerate protein folding. In Prosthecochloris aestuarii (strain DSM 271 / SK 413), this protein is Chaperonin GroEL.